The following is a 231-amino-acid chain: Lipid A acyltransferase PagP (231 aa).

The signal sequence occupies residues 1–23 (MNKLTVRNFIVGLLIVFSLNSFS). The segment covering 24–43 (SPPSISNSSSNSIDENSPIN) has biased composition (low complexity). The segment at 24–59 (SPPSISNSSSNSIDENSPINTFKISPDNQTSKKSDL) is disordered. Catalysis depends on residues H100, D145, and S146.

It belongs to the lipid A palmitoyltransferase family. In terms of assembly, homodimer.

The protein localises to the cell outer membrane. It carries out the reaction a lipid A + a 1,2-diacyl-sn-glycero-3-phosphocholine = a hepta-acyl lipid A + a 2-acyl-sn-glycero-3-phosphocholine. It catalyses the reaction a lipid IVA + a 1,2-diacyl-sn-glycero-3-phosphocholine = a lipid IVB + a 2-acyl-sn-glycero-3-phosphocholine. The enzyme catalyses a lipid IIA + a 1,2-diacyl-sn-glycero-3-phosphocholine = a lipid IIB + a 2-acyl-sn-glycero-3-phosphocholine. Functionally, transfers a fatty acid residue from the sn-1 position of a phospholipid to the N-linked hydroxyfatty acid chain on the proximal unit of lipid A or its precursors. This chain is Lipid A acyltransferase PagP, found in Legionella longbeachae serogroup 1 (strain NSW150).